The primary structure comprises 1241 residues: ATP-dependent helicase/nuclease subunit A (1241 aa).

Residues 12–485 (SQWTDDQWKA…IDLAKNFRSR (474 aa)) form the UvrD-like helicase ATP-binding domain. Residue 33–40 (AAAGSGKT) coordinates ATP. The region spanning 505 to 805 (GEIDYDADAE…RIMTIHKSKG (301 aa)) is the UvrD-like helicase C-terminal domain.

The protein belongs to the helicase family. AddA subfamily. As to quaternary structure, heterodimer of AddA and AddB/RexB. The cofactor is Mg(2+).

It carries out the reaction Couples ATP hydrolysis with the unwinding of duplex DNA by translocating in the 3'-5' direction.. The enzyme catalyses ATP + H2O = ADP + phosphate + H(+). Functionally, the heterodimer acts as both an ATP-dependent DNA helicase and an ATP-dependent, dual-direction single-stranded exonuclease. Recognizes the chi site generating a DNA molecule suitable for the initiation of homologous recombination. The AddA nuclease domain is required for chi fragment generation; this subunit has the helicase and 3' -&gt; 5' nuclease activities. This Bacillus cereus (strain G9842) protein is ATP-dependent helicase/nuclease subunit A.